The following is a 215-amino-acid chain: Oligoribonuclease (215 aa).

Residues 5–170 enclose the Exonuclease domain; it reads LVWIDCEMTG…ADIHESIREL (166 aa). Tyr127 is an active-site residue. Positions 196–215 are disordered; that stretch reads LGPPGKDAADTDSAAGHTTG.

The protein belongs to the oligoribonuclease family.

It is found in the cytoplasm. Functionally, 3'-to-5' exoribonuclease specific for small oligoribonucleotides. The sequence is that of Oligoribonuclease from Mycobacterium sp. (strain JLS).